The sequence spans 21 residues: Helicopsin (21 aa).

The protein belongs to the CRISP family. Contains 8 disulfide bonds. Expressed by the salivary gland.

It is found in the secreted. Its function is as follows. Helicopsin exhibits robust neurotoxic activity as shown by immediate death (about 8 minutes) of mice due to respiratory paralysis. The chain is Helicopsin from Helicops angulatus (South American water snake).